Here is a 285-residue protein sequence, read N- to C-terminus: Diphthine methyl ester synthase (285 aa).

Residues L9, D84, G87, 112 to 113 (SI), L163, V221, and H246 contribute to the S-adenosyl-L-methionine site.

The protein belongs to the diphthine synthase family.

The protein localises to the cytoplasm. It catalyses the reaction 2-[(3S)-amino-3-carboxypropyl]-L-histidyl-[translation elongation factor 2] + 4 S-adenosyl-L-methionine = diphthine methyl ester-[translation elongation factor 2] + 4 S-adenosyl-L-homocysteine + 3 H(+). The protein operates within protein modification; peptidyl-diphthamide biosynthesis. Functionally, S-adenosyl-L-methionine-dependent methyltransferase that catalyzes four methylations of the modified target histidine residue in translation elongation factor 2 (EF-2), to form an intermediate called diphthine methyl ester. The four successive methylation reactions represent the second step of diphthamide biosynthesis. This chain is Diphthine methyl ester synthase (dph5), found in Emericella nidulans (strain FGSC A4 / ATCC 38163 / CBS 112.46 / NRRL 194 / M139) (Aspergillus nidulans).